Here is a 162-residue protein sequence, read N- to C-terminus: Phenazine biosynthesis protein PhzA1 (162 aa).

This sequence belongs to the PhzA/PhzB family.

The protein operates within antibiotic biosynthesis; phenazine biosynthesis. Its function is as follows. Involved in the biosynthesis of the antibiotic phenazine, a nitrogen-containing heterocyclic molecule. PhzA1 (operon phzA1B1C1E1F1G1) has a role in the biosynthesis of the phenazine during planktonic growth. The polypeptide is Phenazine biosynthesis protein PhzA1 (Pseudomonas aeruginosa (strain ATCC 15692 / DSM 22644 / CIP 104116 / JCM 14847 / LMG 12228 / 1C / PRS 101 / PAO1)).